A 420-amino-acid chain; its full sequence is 3-phosphoshikimate 1-carboxyvinyltransferase (420 aa).

3-phosphoshikimate contacts are provided by K20, S21, and R25. Residue K20 participates in phosphoenolpyruvate binding. The phosphoenolpyruvate site is built by G90 and R118. The 3-phosphoshikimate site is built by S159, S160, Q161, S187, D303, and K330. A phosphoenolpyruvate-binding site is contributed by Q161. Residue D303 is the Proton acceptor of the active site. Phosphoenolpyruvate contacts are provided by R334, R376, and K402.

This sequence belongs to the EPSP synthase family. Monomer.

The protein localises to the cytoplasm. It catalyses the reaction 3-phosphoshikimate + phosphoenolpyruvate = 5-O-(1-carboxyvinyl)-3-phosphoshikimate + phosphate. It functions in the pathway metabolic intermediate biosynthesis; chorismate biosynthesis; chorismate from D-erythrose 4-phosphate and phosphoenolpyruvate: step 6/7. In terms of biological role, catalyzes the transfer of the enolpyruvyl moiety of phosphoenolpyruvate (PEP) to the 5-hydroxyl of shikimate-3-phosphate (S3P) to produce enolpyruvyl shikimate-3-phosphate and inorganic phosphate. In Brachyspira hyodysenteriae (strain ATCC 49526 / WA1), this protein is 3-phosphoshikimate 1-carboxyvinyltransferase.